A 438-amino-acid polypeptide reads, in one-letter code: MGQTLSEPVVEKTSEKGEDDRLIYGVSAMQGWRISMEDAHTAELNLPPPDNDTKTHPDRLSFFGVFDGHGGDKVALFAGENIHNIVFKQESFKSGDYAQGLKDGFLATDRAILNDPKYEEEVSGCTACVTLIAGNKLYVANAGDSRSVLGIKGRAKPLSNDHKPQLETEKNRITAAGGFVDFGRVNGNLALSRAIGDFEFKKSAELSPENQIVTAFPDVEVHELTEEDEFLVIACDGIWDCQSSQAVVEFVRRGIAAKQDLDKICENMMDNCLASNSETGGVGCDNMTMVIIGFLHGKTKEEWYDEIAKRVANGDGPCAPPEYAEFRGPGVHHNYEDSDSGYDVDADSGGKFSLAGSRGRIIFLGDGTEVLTGSDDTEMFDNADEDKDLASQVPKSSGKTDAKEETEAKPAPEAESSKPADGSEKKQDEKTPEESKKD.

Residues 23–294 form the PPM-type phosphatase domain; sequence IYGVSAMQGW…DNMTMVIIGF (272 aa). Mn(2+) is bound by residues Asp67, Gly68, Asp236, and Asp285. The disordered stretch occupies residues 370–438; it reads VLTGSDDTEM…EKTPEESKKD (69 aa). The segment covering 375 to 387 has biased composition (acidic residues); it reads DDTEMFDNADEDK. Residues 398–438 show a composition bias toward basic and acidic residues; it reads GKTDAKEETEAKPAPEAESSKPADGSEKKQDEKTPEESKKD.

It belongs to the PP2C family. Mg(2+) is required as a cofactor. Mn(2+) serves as cofactor.

The protein resides in the cytoplasm. The protein localises to the nucleus. It catalyses the reaction O-phospho-L-seryl-[protein] + H2O = L-seryl-[protein] + phosphate. It carries out the reaction O-phospho-L-threonyl-[protein] + H2O = L-threonyl-[protein] + phosphate. Functionally, dephosphorylating regulator for many key proteins. Negatively regulates the endoplasmic reticulum unfolded protein response. This is Protein phosphatase 2C homolog 2 from Hypocrea jecorina (strain QM6a) (Trichoderma reesei).